Here is a 122-residue protein sequence, read N- to C-terminus: Large ribosomal subunit protein uL18 (122 aa).

The protein belongs to the universal ribosomal protein uL18 family. Part of the 50S ribosomal subunit; part of the 5S rRNA/L5/L18/L25 subcomplex. Contacts the 5S and 23S rRNAs.

This is one of the proteins that bind and probably mediate the attachment of the 5S RNA into the large ribosomal subunit, where it forms part of the central protuberance. The chain is Large ribosomal subunit protein uL18 from Thermosipho africanus (strain TCF52B).